A 691-amino-acid chain; its full sequence is POU domain, class 6, transcription factor 2 (691 aa).

Residues 25 to 36 (MNAELRGEDKAA) are compositionally biased toward basic and acidic residues. 3 disordered regions span residues 25 to 93 (MNAE…PVGP), 186 to 297 (LQQQ…LQLV), and 435 to 461 (SQAS…SALS). Positions 186–195 (LQQQQQQQQQ) are enriched in low complexity. Residues 196-210 (QPPPSTNQHPQPAPQ) are compositionally biased toward pro residues. A compositionally biased stretch (low complexity) spans 211–220 (APSQSQQQPL). Pro residues predominate over residues 221–238 (QPTPPQQPPPASQQPPAP). Composition is skewed to low complexity over residues 239–280 (TSQL…SQSP) and 438–461 (SMSQ…SALS). Residues 476–586 (VDGVNLEEIR…VLERWMAEAE (111 aa)) enclose the POU-specific domain. Positions 607-666 (KRKRRTSFTPQALEILNAHFEKNTHPSGQEMTEIAEKLNYDREVVRVWFCNKRQALKNTI) form a DNA-binding region, homeobox.

It belongs to the POU transcription factor family. Class-6 subfamily. In terms of tissue distribution, expressed only within the CNS, where its expression is restricted to the medical habenulla, to a dispersed population of neurons in the dorsal hypothalamus, and to subsets of ganglion and amacrine cells in the retina.

The protein resides in the nucleus. Functionally, probable transcription factor likely to be involved in early steps in the differentiation of amacrine and ganglion cells. Recognizes and binds to the DNA sequence 5'-ATGCAAAT-3'. Isoform 1 does not bind DNA. The polypeptide is POU domain, class 6, transcription factor 2 (POU6F2) (Homo sapiens (Human)).